We begin with the raw amino-acid sequence, 244 residues long: Small ribosomal subunit protein uS2 (244 aa).

It belongs to the universal ribosomal protein uS2 family.

This is Small ribosomal subunit protein uS2 from Buchnera aphidicola subsp. Acyrthosiphon pisum (strain 5A).